The following is a 159-amino-acid chain: 6,7-dimethyl-8-ribityllumazine synthase (159 aa).

Residues W26, 58-60 (AIE), and 80-82 (VVI) contribute to the 5-amino-6-(D-ribitylamino)uracil site. 85-86 (ET) provides a ligand contact to (2S)-2-hydroxy-3-oxobutyl phosphate. H88 (proton donor) is an active-site residue. N113 contacts 5-amino-6-(D-ribitylamino)uracil. R127 contributes to the (2S)-2-hydroxy-3-oxobutyl phosphate binding site.

This sequence belongs to the DMRL synthase family. In terms of assembly, homopentamer.

It carries out the reaction (2S)-2-hydroxy-3-oxobutyl phosphate + 5-amino-6-(D-ribitylamino)uracil = 6,7-dimethyl-8-(1-D-ribityl)lumazine + phosphate + 2 H2O + H(+). It functions in the pathway cofactor biosynthesis; riboflavin biosynthesis; riboflavin from 2-hydroxy-3-oxobutyl phosphate and 5-amino-6-(D-ribitylamino)uracil: step 1/2. In terms of biological role, catalyzes the formation of 6,7-dimethyl-8-ribityllumazine by condensation of 5-amino-6-(D-ribitylamino)uracil with 3,4-dihydroxy-2-butanone 4-phosphate. This is the penultimate step in the biosynthesis of riboflavin. The chain is 6,7-dimethyl-8-ribityllumazine synthase from Mycolicibacterium gilvum (strain PYR-GCK) (Mycobacterium gilvum (strain PYR-GCK)).